Here is a 693-residue protein sequence, read N- to C-terminus: tRNA (guanine(37)-N(1))-methyltransferase (693 aa).

S-adenosyl-L-methionine contacts are provided by residues Arg-327, 365–366, and 392–393; these read DI and DA. The segment at 497 to 572 is disordered; it reads AGDSHQSNSH…QKAEDAPTNE (76 aa). The segment covering 500–512 has biased composition (low complexity); sequence SHQSNSHQSNPHE. An S-adenosyl-L-methionine-binding site is contributed by Asn-591.

It belongs to the class I-like SAM-binding methyltransferase superfamily. TRM5/TYW2 family. As to quaternary structure, monomer.

The protein localises to the mitochondrion matrix. Its subcellular location is the nucleus. The protein resides in the cytoplasm. It catalyses the reaction guanosine(37) in tRNA + S-adenosyl-L-methionine = N(1)-methylguanosine(37) in tRNA + S-adenosyl-L-homocysteine + H(+). In terms of biological role, specifically methylates the N1 position of guanosine-37 in various cytoplasmic and mitochondrial tRNAs. Methylation is not dependent on the nature of the nucleoside 5' of the target nucleoside. This is the first step in the biosynthesis of wybutosine (yW), a modified base adjacent to the anticodon of tRNAs and required for accurate decoding. In Plasmodium vivax (strain Salvador I), this protein is tRNA (guanine(37)-N(1))-methyltransferase.